The primary structure comprises 370 residues: Putative agmatine deiminase (370 aa).

Over residues 1 to 19 (MTNMNVDATQLTTKPSQDG) the composition is skewed to polar residues. Positions 1-20 (MTNMNVDATQLTTKPSQDGF) are disordered. C361 (amidino-cysteine intermediate) is an active-site residue.

The protein belongs to the agmatine deiminase family.

The catalysed reaction is agmatine + H2O = N-carbamoylputrescine + NH4(+). The protein is Putative agmatine deiminase of Shewanella frigidimarina (strain NCIMB 400).